The chain runs to 214 residues: MDLHFENIRREYDKRSLSASDLTPTPFDLVTRWLQDAVEAKTYEPTAVIVGTATPDGHPSTRTVLLKEFMNNEFIFYSNYESRKGQQMAANPHVCLTFLWHELERQIHVEGDVRILEPELSDAYFATRPYKSRVGARISPQSRPIPGRSFIVQEFMKESLKYAGRTVPRPDTWGGFAVKPVRIEFWQGRESRLHDRFLYELRPDASWSVHRLAP.

Substrate-binding positions include 9–12 and K67; that span reads RREY. FMN contacts are provided by residues 62–67, 77–78, R83, K84, and Q106; these read RTVLLK and YS. Y124, R128, and S132 together coordinate substrate. FMN is bound by residues 141–142 and W186; that span reads QS. A substrate-binding site is contributed by 192 to 194; sequence RLH. R196 serves as a coordination point for FMN.

It belongs to the pyridoxamine 5'-phosphate oxidase family. As to quaternary structure, homodimer. FMN is required as a cofactor.

The enzyme catalyses pyridoxamine 5'-phosphate + O2 + H2O = pyridoxal 5'-phosphate + H2O2 + NH4(+). The catalysed reaction is pyridoxine 5'-phosphate + O2 = pyridoxal 5'-phosphate + H2O2. It participates in cofactor metabolism; pyridoxal 5'-phosphate salvage; pyridoxal 5'-phosphate from pyridoxamine 5'-phosphate: step 1/1. The protein operates within cofactor metabolism; pyridoxal 5'-phosphate salvage; pyridoxal 5'-phosphate from pyridoxine 5'-phosphate: step 1/1. Catalyzes the oxidation of either pyridoxine 5'-phosphate (PNP) or pyridoxamine 5'-phosphate (PMP) into pyridoxal 5'-phosphate (PLP). The protein is Pyridoxine/pyridoxamine 5'-phosphate oxidase of Porphyromonas gingivalis (strain ATCC BAA-308 / W83).